The primary structure comprises 170 residues: MKEAYLYIVEKSVAWEFDSPEYGRLARKVVELLYERKEDLSDDRVAIFLNISTAETRRILQYLMKQNMVGVKKRTTEDYRIEYTWYVDDEIIRQAIKNRAKVAKEKISSLIRSLTEGAYYICPTCHMRYTLDEAINYGGVCPVCGTQLEYVENTEEINKLTKVYEEVDKI.

An HTH TFE/IIEalpha-type domain is found at M1–R93.

The protein belongs to the TFE family. Monomer. Interaction with RNA polymerase subunits RpoF and RpoE is necessary for Tfe stimulatory transcription activity. Able to interact with Tbp and RNA polymerase in the absence of DNA promoter. Interacts both with the preinitiation and elongation complexes.

Its function is as follows. Transcription factor that plays a role in the activation of archaeal genes transcribed by RNA polymerase. Facilitates transcription initiation by enhancing TATA-box recognition by TATA-box-binding protein (Tbp), and transcription factor B (Tfb) and RNA polymerase recruitment. Not absolutely required for transcription in vitro, but particularly important in cases where Tbp or Tfb function is not optimal. It dynamically alters the nucleic acid-binding properties of RNA polymerases by stabilizing the initiation complex and destabilizing elongation complexes. Seems to translocate with the RNA polymerase following initiation and acts by binding to the non template strand of the transcription bubble in elongation complexes. This Pyrobaculum islandicum (strain DSM 4184 / JCM 9189 / GEO3) protein is Transcription factor E.